The primary structure comprises 462 residues: Cysteine--tRNA ligase (462 aa).

Cys29 contributes to the Zn(2+) binding site. The short motif at 31-41 is the 'HIGH' region element; the sequence is MTVYDLCHLGH. Residues Cys217, His242, and Glu246 each coordinate Zn(2+). A 'KMSKS' region motif is present at residues 274-278; the sequence is KMSKS. Lys277 contributes to the ATP binding site.

This sequence belongs to the class-I aminoacyl-tRNA synthetase family. Monomer. Requires Zn(2+) as cofactor.

It is found in the cytoplasm. The enzyme catalyses tRNA(Cys) + L-cysteine + ATP = L-cysteinyl-tRNA(Cys) + AMP + diphosphate. The polypeptide is Cysteine--tRNA ligase (Polaromonas sp. (strain JS666 / ATCC BAA-500)).